The sequence spans 273 residues: Peptide deformylase 1B, chloroplastic/mitochondrial (273 aa).

Residues 1–56 (MAVCNCFLQAPPLSRILLPVLSRRATTLSAGYGRLKSTVTFCSTVNRTSPLTSSVR) constitute a chloroplast and mitochondrion transit peptide. Fe cation-binding residues include cysteine 171 and histidine 213. The active site involves glutamate 214. Residue histidine 217 participates in Fe cation binding. The segment covering 246 to 261 (YEEKTGLPSPERVEAR) has biased composition (basic and acidic residues). The disordered stretch occupies residues 246 to 273 (YEEKTGLPSPERVEARQKRKAGVGFGKR). The segment covering 262-273 (QKRKAGVGFGKR) has biased composition (basic residues).

The protein belongs to the polypeptide deformylase family. Homodimer. The cofactor is Fe(2+). Expressed in leaves and flowers.

It is found in the plastid. The protein localises to the chloroplast stroma. Its subcellular location is the mitochondrion. It carries out the reaction N-terminal N-formyl-L-methionyl-[peptide] + H2O = N-terminal L-methionyl-[peptide] + formate. Its activity is regulated as follows. Inhibited by actinonin. Functionally, removes the formyl group from the N-terminal Met of newly synthesized proteins. Has a preferred substrate specificity towards the photosystem II (PS II) D1 polypeptide. This Arabidopsis thaliana (Mouse-ear cress) protein is Peptide deformylase 1B, chloroplastic/mitochondrial (PDF1B).